A 987-amino-acid polypeptide reads, in one-letter code: Leucine--tRNA ligase (987 aa).

Positions Pro-69 to His-80 match the 'HIGH' region motif. A 'KMSKS' region motif is present at residues Lys-760–Ser-764. Position 763 (Lys-763) interacts with ATP.

This sequence belongs to the class-I aminoacyl-tRNA synthetase family.

The protein resides in the cytoplasm. It carries out the reaction tRNA(Leu) + L-leucine + ATP = L-leucyl-tRNA(Leu) + AMP + diphosphate. The polypeptide is Leucine--tRNA ligase (Bifidobacterium longum (strain DJO10A)).